The sequence spans 61 residues: Beta-insect depressant toxin BaIT2 (61 aa).

Residues 1–61 enclose the LCN-type CS-alpha/beta domain; sequence DGYIRRRDGC…TWKSETNTCG (61 aa). 4 disulfides stabilise this stretch: cysteine 10–cysteine 60, cysteine 14–cysteine 35, cysteine 21–cysteine 42, and cysteine 25–cysteine 44.

Belongs to the long (4 C-C) scorpion toxin superfamily. Sodium channel inhibitor family. Beta subfamily. Expressed by the venom gland.

The protein resides in the secreted. Its function is as follows. Depressant insect beta-toxins cause a transient contraction paralysis followed by a slow flaccid paralysis. They bind voltage-independently at site-4 of sodium channels (Nav) and shift the voltage of activation toward more negative potentials thereby affecting sodium channel activation and promoting spontaneous and repetitive firing. This toxin is active only on insects. This chain is Beta-insect depressant toxin BaIT2, found in Buthacus arenicola (North African scorpion).